The following is a 339-amino-acid chain: Biotin synthase (339 aa).

A Radical SAM core domain is found at 55–282 (NAVQLSTLLS…KAVVRLSAGR (228 aa)). Residues cysteine 70, cysteine 74, and cysteine 77 each coordinate [4Fe-4S] cluster. 4 residues coordinate [2Fe-2S] cluster: cysteine 114, cysteine 145, cysteine 205, and arginine 277.

The protein belongs to the radical SAM superfamily. Biotin synthase family. In terms of assembly, homodimer. It depends on [4Fe-4S] cluster as a cofactor. Requires [2Fe-2S] cluster as cofactor.

The enzyme catalyses (4R,5S)-dethiobiotin + (sulfur carrier)-SH + 2 reduced [2Fe-2S]-[ferredoxin] + 2 S-adenosyl-L-methionine = (sulfur carrier)-H + biotin + 2 5'-deoxyadenosine + 2 L-methionine + 2 oxidized [2Fe-2S]-[ferredoxin]. The protein operates within cofactor biosynthesis; biotin biosynthesis; biotin from 7,8-diaminononanoate: step 2/2. Functionally, catalyzes the conversion of dethiobiotin (DTB) to biotin by the insertion of a sulfur atom into dethiobiotin via a radical-based mechanism. The chain is Biotin synthase from Burkholderia ambifaria (strain MC40-6).